The following is a 128-amino-acid chain: ATP synthase epsilon chain (128 aa).

The tract at residues 98–128 (EALDMPSSTPEQAQIKDAAVRRARGQLRASR) is disordered. Positions 118-128 (RRARGQLRASR) are enriched in basic residues.

This sequence belongs to the ATPase epsilon chain family. In terms of assembly, F-type ATPases have 2 components, CF(1) - the catalytic core - and CF(0) - the membrane proton channel. CF(1) has five subunits: alpha(3), beta(3), gamma(1), delta(1), epsilon(1). CF(0) has three main subunits: a, b and c.

It localises to the cell inner membrane. In terms of biological role, produces ATP from ADP in the presence of a proton gradient across the membrane. The protein is ATP synthase epsilon chain of Rhodopirellula baltica (strain DSM 10527 / NCIMB 13988 / SH1).